We begin with the raw amino-acid sequence, 264 residues long: Zinc transporter ZupT (264 aa).

5 consecutive transmembrane segments (helical) span residues A8–V28, F36–I56, W75–I95, G121–I141, and S148–V168. Residues N132 and E135 each contribute to the Fe(2+) site. Zn(2+) is bound by residues E135 and H160. Residues N161, E164, and E193 each coordinate Fe(2+). E164 lines the Zn(2+) pocket. 3 helical membrane passes run A197–F217, A219–Y239, and L244–I264.

It belongs to the ZIP transporter (TC 2.A.5) family. ZupT subfamily.

It localises to the cell membrane. It carries out the reaction Zn(2+)(in) = Zn(2+)(out). Mediates zinc uptake. May also transport other divalent cations. In Streptococcus mutans serotype c (strain ATCC 700610 / UA159), this protein is Zinc transporter ZupT.